Here is a 645-residue protein sequence, read N- to C-terminus: Phosphomethylpyrimidine synthase (645 aa).

Positions 1–12 (MSHNTVIPTTDI) are enriched in polar residues. The segment at 1-25 (MSHNTVIPTTDISPKPDPARPRKAQ) is disordered. Residues asparagine 253, methionine 282, tyrosine 311, histidine 347, 367-369 (SRG), 408-411 (DGLR), and glutamate 447 each bind substrate. Histidine 451 contacts Zn(2+). Tyrosine 474 is a substrate binding site. Histidine 515 provides a ligand contact to Zn(2+). Residues cysteine 595, cysteine 598, and cysteine 603 each contribute to the [4Fe-4S] cluster site.

This sequence belongs to the ThiC family. As to quaternary structure, homodimer. [4Fe-4S] cluster serves as cofactor.

It carries out the reaction 5-amino-1-(5-phospho-beta-D-ribosyl)imidazole + S-adenosyl-L-methionine = 4-amino-2-methyl-5-(phosphooxymethyl)pyrimidine + CO + 5'-deoxyadenosine + formate + L-methionine + 3 H(+). It functions in the pathway cofactor biosynthesis; thiamine diphosphate biosynthesis. Its function is as follows. Catalyzes the synthesis of the hydroxymethylpyrimidine phosphate (HMP-P) moiety of thiamine from aminoimidazole ribotide (AIR) in a radical S-adenosyl-L-methionine (SAM)-dependent reaction. The polypeptide is Phosphomethylpyrimidine synthase (Photorhabdus laumondii subsp. laumondii (strain DSM 15139 / CIP 105565 / TT01) (Photorhabdus luminescens subsp. laumondii)).